We begin with the raw amino-acid sequence, 332 residues long: Polyprenyl transferase yanG (332 aa).

A run of 8 helical transmembrane segments spans residues 42–62, 72–92, 145–165, 170–190, 200–220, 242–262, 266–286, and 300–320; these read IWGA…LAFA, VTAT…FFVV, PAVT…PFMK, FPQV…WVGV, ALPL…FYAT, VKIL…MTAL, LSLI…PWHV, and VFKA…LELV.

It belongs to the UbiA prenyltransferase family. Mg(2+) is required as a cofactor.

Its subcellular location is the membrane. Its pathway is secondary metabolite biosynthesis; terpenoid biosynthesis. In terms of biological role, polyprenyl transferase; part of the gene cluster that mediates the biosynthesis of yanuthone D, a fungal isoprenoid epoxycyclohexenone that acts as an antibiotic against fungi and bacteria. The first step of the pathway is the synthesis of 6-methylsalicylic acid (6-MSA) by the polyketide synthase yanA. 6-MSA is then converted to m-cresol by the decarboxylase yanB. The cytochrome P450 monooxygenase yanC then catalyzes the oxidation of m-cresol to toluquinol. Epoxidation of toluquinol is then performed by the short chain dehydrogenase yanD, with the help of yanE, and a further prenylation by yanG leads to 7-deacetoxyyanuthone A. The next step is the hydroxylation of C-22 of 7-deacetoxyyanuthone A by the cytochrome P450 monooxygenase yanH to yield 22-deacetylyanuthone A. O-Mevalon transferase yanI then attaches mevalon to the hydroxyl group of 22-deacetylyanuthone A to produce yanuthone E. Finally, the FAD-dependent monooxygenase yanF oxidizes the hydroxyl group at C15 of yanuthone E to form yanuthone D. Furthermore, several branching points in the pathway lead to the production of yanuthones F and G from 7-deacetoxyyanuthone A; yanuthones H and I from 22-deacetylyanuthone A; and yanuthone J from yanuthone E. YanG is also involved in the synthesis of yanuthone X1 which does not have 6-methylsalicylic acid (6-MSA) as precursor. The polypeptide is Polyprenyl transferase yanG (Aspergillus niger (strain ATCC 1015 / CBS 113.46 / FGSC A1144 / LSHB Ac4 / NCTC 3858a / NRRL 328 / USDA 3528.7)).